We begin with the raw amino-acid sequence, 332 residues long: 2,3-diketo-L-gulonate reductase (332 aa).

His44 functions as the Proton donor in the catalytic mechanism. Residues 168–174 (ITMVDMS), 224–225 (WK), and 304–306 (GHE) each bind NAD(+).

It belongs to the LDH2/MDH2 oxidoreductase family. DlgD subfamily. Homodimer.

The protein resides in the cytoplasm. It carries out the reaction 3-dehydro-L-gulonate + NAD(+) = 2,3-dioxo-L-gulonate + NADH + H(+). The enzyme catalyses 3-dehydro-L-gulonate + NADP(+) = 2,3-dioxo-L-gulonate + NADPH + H(+). Its function is as follows. Catalyzes the reduction of 2,3-diketo-L-gulonate in the presence of NADH, to form 3-keto-L-gulonate. In Escherichia coli O17:K52:H18 (strain UMN026 / ExPEC), this protein is 2,3-diketo-L-gulonate reductase.